The primary structure comprises 198 residues: Na(+)-translocating NADH-quinone reductase subunit E (198 aa).

6 helical membrane passes run Ala11 to Val31, Val35 to Val55, Phe77 to Val97, Gly110 to Val130, Ile140 to Leu160, and Leu176 to Ile196.

This sequence belongs to the NqrDE/RnfAE family. As to quaternary structure, composed of six subunits; NqrA, NqrB, NqrC, NqrD, NqrE and NqrF.

The protein resides in the cell inner membrane. The catalysed reaction is a ubiquinone + n Na(+)(in) + NADH + H(+) = a ubiquinol + n Na(+)(out) + NAD(+). NQR complex catalyzes the reduction of ubiquinone-1 to ubiquinol by two successive reactions, coupled with the transport of Na(+) ions from the cytoplasm to the periplasm. NqrA to NqrE are probably involved in the second step, the conversion of ubisemiquinone to ubiquinol. The polypeptide is Na(+)-translocating NADH-quinone reductase subunit E (Haemophilus influenzae (strain 86-028NP)).